Reading from the N-terminus, the 431-residue chain is F-box protein pof14 (431 aa).

One can recognise an F-box; atypical domain in the interval 172 to 186 (CPDEILQLIFSYCYD).

In terms of assembly, component of the E3 ubiquitin ligase Skp1-Cullin-1-F-box (SCF) complex. Interacts with skp1, cul1 and erg9.

It localises to the cytoplasm. The protein localises to the nucleus. The protein resides in the endoplasmic reticulum. Its function is as follows. Expression is induced during oxidative stress. Plays an essential, SCF-independent, role in the stress response to hydrogen peroxide for survival, by negatively regulating ergosterol synthesis via direct binding to the squalene synthase erg9. In Schizosaccharomyces pombe (strain 972 / ATCC 24843) (Fission yeast), this protein is F-box protein pof14 (pof14).